Consider the following 212-residue polypeptide: HTH-type transcriptional repressor KstR (212 aa).

Residues 1 to 11 are compositionally biased toward low complexity; sequence MTTSSRSRSST. The disordered stretch occupies residues 1-28; sequence MTTSSRSRSSTVAAATLGEDDLSSNAQK. Positions 28 to 88 constitute an HTH tetR-type domain; the sequence is KERRKRILDA…SALAREFERI (61 aa). A DNA-binding region (H-T-H motif) is located at residues 51-70; the sequence is QMRAVAERADVAVGTLYRYF.

As to quaternary structure, homodimer.

Controls the expression of genes used for utilizing diverse lipids as energy sources. The sequence is that of HTH-type transcriptional repressor KstR (kstR) from Rhodococcus jostii (strain RHA1).